A 163-amino-acid polypeptide reads, in one-letter code: uncharacterized protein (163 aa).

This is an uncharacterized protein from Shigella flexneri.